The following is a 50-amino-acid chain: Small, acid-soluble spore protein K (50 aa).

The disordered stretch occupies residues 1–50; that stretch reads MVRNKAKGFPNQNNNKFEGEPRAKDDYASKRADGSINSHPQERMRASGRR. 2 stretches are compositionally biased toward basic and acidic residues: residues 17 to 33 and 40 to 50; these read FEGEPRAKDDYASKRAD and PQERMRASGRR.

The protein belongs to the SspK family.

It is found in the spore core. This Bacillus velezensis (strain DSM 23117 / BGSC 10A6 / LMG 26770 / FZB42) (Bacillus amyloliquefaciens subsp. plantarum) protein is Small, acid-soluble spore protein K.